Reading from the N-terminus, the 315-residue chain is tRNA uridine(34) hydroxylase (315 aa).

Positions 145 to 235 constitute a Rhodanese domain; sequence MKNDFILVDM…GIIEYVNFIK (91 aa). Cysteine 199 serves as the catalytic Cysteine persulfide intermediate.

Belongs to the TrhO family.

It catalyses the reaction uridine(34) in tRNA + AH2 + O2 = 5-hydroxyuridine(34) in tRNA + A + H2O. Its function is as follows. Catalyzes oxygen-dependent 5-hydroxyuridine (ho5U) modification at position 34 in tRNAs. This chain is tRNA uridine(34) hydroxylase, found in Wigglesworthia glossinidia brevipalpis.